A 721-amino-acid polypeptide reads, in one-letter code: Glucans biosynthesis glucosyltransferase H (721 aa).

7 helical membrane passes run 54 to 74, 85 to 105, 404 to 424, 458 to 478, 493 to 513, 548 to 568, and 569 to 589; these read LIMV…YQVL, VVLV…VSAL, GIGA…GILI, FAGT…LVLI, FGGV…MMVF, YALP…VSWP, and LLLW…VALL.

The protein belongs to the glycosyltransferase 2 family. OpgH subfamily.

Its subcellular location is the cell inner membrane. It participates in glycan metabolism; osmoregulated periplasmic glucan (OPG) biosynthesis. In terms of biological role, involved in the biosynthesis of osmoregulated periplasmic glucans (OPGs). This chain is Glucans biosynthesis glucosyltransferase H, found in Rhodopseudomonas palustris (strain TIE-1).